Consider the following 229-residue polypeptide: DNA mismatch repair protein MutH (229 aa).

This sequence belongs to the MutH family.

It is found in the cytoplasm. Its function is as follows. Sequence-specific endonuclease that cleaves unmethylated GATC sequences. It is involved in DNA mismatch repair. In Escherichia coli O17:K52:H18 (strain UMN026 / ExPEC), this protein is DNA mismatch repair protein MutH.